The sequence spans 117 residues: Large ribosomal subunit protein bL19 (117 aa).

Belongs to the bacterial ribosomal protein bL19 family.

Functionally, this protein is located at the 30S-50S ribosomal subunit interface and may play a role in the structure and function of the aminoacyl-tRNA binding site. The chain is Large ribosomal subunit protein bL19 from Bacteroides thetaiotaomicron (strain ATCC 29148 / DSM 2079 / JCM 5827 / CCUG 10774 / NCTC 10582 / VPI-5482 / E50).